The primary structure comprises 317 residues: tRNA(Met) cytidine acetate ligase (317 aa).

Residues 6–19 (IAEYNPFHNGHIYQ), Gly100, Asn157, and Arg182 each bind ATP.

Belongs to the TmcAL family.

It localises to the cytoplasm. The enzyme catalyses cytidine(34) in elongator tRNA(Met) + acetate + ATP = N(4)-acetylcytidine(34) in elongator tRNA(Met) + AMP + diphosphate. In terms of biological role, catalyzes the formation of N(4)-acetylcytidine (ac(4)C) at the wobble position of elongator tRNA(Met), using acetate and ATP as substrates. First activates an acetate ion to form acetyladenylate (Ac-AMP) and then transfers the acetyl group to tRNA to form ac(4)C34. This chain is tRNA(Met) cytidine acetate ligase, found in Mesomycoplasma hyopneumoniae (strain 232) (Mycoplasma hyopneumoniae).